The sequence spans 70 residues: NADH-ubiquinone oxidoreductase chain 3 (70 aa).

The helical transmembrane segment at 42 to 62 (FFVITLIFLIFDVEIYLLLPM) threads the bilayer.

The protein belongs to the complex I subunit 3 family.

It is found in the mitochondrion membrane. The enzyme catalyses a ubiquinone + NADH + 5 H(+)(in) = a ubiquinol + NAD(+) + 4 H(+)(out). Its function is as follows. Core subunit of the mitochondrial membrane respiratory chain NADH dehydrogenase (Complex I) that is believed to belong to the minimal assembly required for catalysis. Complex I functions in the transfer of electrons from NADH to the respiratory chain. The immediate electron acceptor for the enzyme is believed to be ubiquinone. The chain is NADH-ubiquinone oxidoreductase chain 3 (ND3) from Artemia salina (Brine shrimp).